The sequence spans 524 residues: MTVPTDTVSRRLQSLAWSDIKQHAPWLPSSRTLVSGFLCLILLQILYSRGRKSDLRVYNPKKWWELTTMRAKREFDANAPAWIEAWFSKNDQPLRFIVDSGYCTILPSSMADEFRKMKELCMYKFLGTDFHSHLPGFDGFKEVTRDAHLITKVVMNQFQTQAAKYTKPLADEASATIADIFGDNKEWHTAPVYNECLDLVTRTVTFIMVGDKLAHNEEWLDIAKHHAVTMAIQARQLRLWPVILRPIVHWLEPQGAKLRAQVRRARQLLEPIIQERRAEKAKCLAQGIEPPRYVDSIQWFEDTAKGQWYDAAGAQLAMDFAGIYGTSDLMIGGLVDIVRHPHLIEPLRNEIRTVIGEEGWTPASLYKLKLLDSCLKESQRVKPVECATMRSYALQNVTFSNGTFVPKGELVAVAADRMSNPEVWPEPKKYDPYRYMRLREDPDKAFSAQLENTNGNHIGFGWHPRACPGRFFASKEIKIMLAFLLIRYDWKLVPNEPLQYYRHSFSVRIHPATKLMMRRRDEDL.

Residues 1–25 (MTVPTDTVSRRLQSLAWSDIKQHAP) are Cytoplasmic-facing. Residues 26–47 (WLPSSRTLVSGFLCLILLQILY) traverse the membrane as a helical; Signal-anchor for type II membrane protein segment. Residues 48-524 (SRGRKSDLRV…LMMRRRDEDL (477 aa)) are Lumenal-facing. N-linked (GlcNAc...) asparagine glycosylation is found at N396 and N401. C467 provides a ligand contact to heme.

Belongs to the cytochrome P450 family. The cofactor is heme.

It localises to the endoplasmic reticulum membrane. The catalysed reaction is dihydromonacolin L carboxylate + reduced [NADPH--hemoprotein reductase] + O2 = monacolin L carboxylate + oxidized [NADPH--hemoprotein reductase] + 2 H2O + H(+). It carries out the reaction monacolin L carboxylate + reduced [NADPH--hemoprotein reductase] + O2 = monacolin J carboxylate + oxidized [NADPH--hemoprotein reductase] + H2O + H(+). It participates in polyketide biosynthesis; lovastatin biosynthesis. Cytochrome P450 monooxygenase; part of the gene cluster that mediates the biosynthesis of monakolin K, also known as lovastatin, and which acts as a potent competitive inhibitor of HMG-CoA reductase. Monakolin K biosynthesis is performed in two stages. The first stage is catalyzed by the nonaketide synthase mokA, which belongs to type I polyketide synthases and catalyzes the iterative nine-step formation of the polyketide. This PKS stage is completed by the action of dehydrogenase mokE, which catalyzes the NADPH-dependent reduction of the unsaturated tetra-, penta- and heptaketide intermediates that arise during the mokA-mediated biosynthesis of the nonaketide chain and leads to dihydromonacolin L. Covalently bound dihydromonacolin L is released from mokA by the mokD esterase. Conversion of dihydromonacolin L into monacolin L and then monacolin J is subsequently performed with the participation of molecular oxygen and P450 monoogygenase mokC. Finally, mokF performs the conversion of monacoline J to monacoline K through the addition of the side-chain diketide moiety (2R)-2-methylbutanoate produced by the diketide synthase mokB. In Monascus pilosus (Red mold), this protein is Dihydromonacolin L monooxygenase mokC.